A 342-amino-acid polypeptide reads, in one-letter code: Glycerol-3-phosphate dehydrogenase [NAD(P)+] (342 aa).

Serine 13, tryptophan 14, and lysine 108 together coordinate NADPH. Sn-glycerol 3-phosphate contacts are provided by lysine 108, glycine 139, and serine 141. Alanine 143 is a binding site for NADPH. Lysine 194, aspartate 247, serine 257, arginine 258, and asparagine 259 together coordinate sn-glycerol 3-phosphate. Lysine 194 acts as the Proton acceptor in catalysis. Arginine 258 contacts NADPH. NADPH contacts are provided by valine 282 and glutamate 284.

This sequence belongs to the NAD-dependent glycerol-3-phosphate dehydrogenase family.

The protein localises to the cytoplasm. The enzyme catalyses sn-glycerol 3-phosphate + NAD(+) = dihydroxyacetone phosphate + NADH + H(+). It catalyses the reaction sn-glycerol 3-phosphate + NADP(+) = dihydroxyacetone phosphate + NADPH + H(+). It functions in the pathway membrane lipid metabolism; glycerophospholipid metabolism. Catalyzes the reduction of the glycolytic intermediate dihydroxyacetone phosphate (DHAP) to sn-glycerol 3-phosphate (G3P), the key precursor for phospholipid synthesis. The chain is Glycerol-3-phosphate dehydrogenase [NAD(P)+] from Lactococcus lactis subsp. cremoris (strain MG1363).